The primary structure comprises 367 residues: Zinc finger CCCH domain-containing protein 56 (367 aa).

The interval 38–80 (YNSQWNADGGGGGSSRAGSEQPPPGKKSRGGGGGEGGGNTSKS) is disordered. Positions 67–76 (GGGGGEGGGN) are enriched in gly residues. 3 consecutive C3H1-type zinc fingers follow at residues 87–114 (FFKTKLCCKFRAGTCPYVTNCNFAHGME), 169–197 (AYKGRHCKKFYTDEGCPYGDACTFLHDEQ), and 245–273 (NWKTRICNKWEMTGYCPFGSKCHFAHGAA).

The polypeptide is Zinc finger CCCH domain-containing protein 56 (Oryza sativa subsp. japonica (Rice)).